The following is a 228-amino-acid chain: Cytidylate kinase (228 aa).

ATP is bound at residue 17 to 25 (GPTASGKGT).

This sequence belongs to the cytidylate kinase family. Type 1 subfamily.

The protein resides in the cytoplasm. The enzyme catalyses CMP + ATP = CDP + ADP. It catalyses the reaction dCMP + ATP = dCDP + ADP. In Burkholderia cenocepacia (strain HI2424), this protein is Cytidylate kinase.